A 134-amino-acid polypeptide reads, in one-letter code: Putative pre-16S rRNA nuclease (134 aa).

The protein belongs to the YqgF nuclease family.

It is found in the cytoplasm. In terms of biological role, could be a nuclease involved in processing of the 5'-end of pre-16S rRNA. This Helicobacter pylori (strain ATCC 700392 / 26695) (Campylobacter pylori) protein is Putative pre-16S rRNA nuclease.